Reading from the N-terminus, the 528-residue chain is Probable serine protease HtrA1 (528 aa).

Positions 1 to 70 are disordered; sequence MDTRVDTDNA…RPSGVQGSFV (70 aa). At 1-178 the chain is on the cytoplasmic side; it reads MDTRVDTDNA…DVLFGGKVSY (178 aa). Residues 31–40 show a composition bias toward gly residues; that stretch reads NNGGPNGGGR. The chain crosses the membrane as a helical span at residues 179–199; that stretch reads LALGILVAIALVIGGIGGVIG. Residues 200-528 are Periplasmic-facing; the sequence is RKTAEVVDAF…LTVKPDPDST (329 aa). Residues H270, D306, and S387 each act as charge relay system in the active site. A PDZ domain is found at 426 to 487; sequence LVANSLIKDG…VIVKVGNRAV (62 aa).

This sequence belongs to the peptidase S1C family. As to quaternary structure, the C-terminal region exhibits both monomeric and trimeric forms in solution.

It is found in the cell inner membrane. The catalysed reaction is Acts on substrates that are at least partially unfolded. The cleavage site P1 residue is normally between a pair of hydrophobic residues, such as Val-|-Val.. In terms of biological role, essential protein that may act as a regulatory protease that is conditionally activated upon appropriate environmental triggers. The chain is Probable serine protease HtrA1 from Mycobacterium tuberculosis (strain ATCC 25618 / H37Rv).